A 138-amino-acid polypeptide reads, in one-letter code: CLAVATA3/ESR (CLE)-related protein 2 (138 aa).

The signal sequence occupies residues Met-1 to Ala-22. A required for secretion from the host cytoplasm to the host apoplasm region spans residues Ser-23–Met-90. N-linked (GlcNAc...) asparagine glycans are attached at residues Asn-37, Asn-87, and Asn-123. 2 disordered regions span residues Ala-66–Val-97 and Leu-116–His-138. A CLE motif is present at residues Arg-127–His-138.

Belongs to the CLV3/ESR signal peptide family. Highly expressed exclusively within the dorsal esophageal gland cell during syncytium formation in host plants (at protein level).

Its subcellular location is the secreted. The protein localises to the host cytoplasm. It localises to the host extracellular space. It is found in the extracellular space. The protein resides in the apoplast. Functionally, mimics host plant CLE extracellular signal peptides that regulate cell fate. May play a role in the differentiation or division of feeding cells (syncytia) induced in plant roots during infection. The protein is CLAVATA3/ESR (CLE)-related protein 2 (CLE2) of Heterodera glycines (Soybean cyst nematode worm).